The primary structure comprises 59 residues: Large ribosomal subunit protein uL30 (59 aa).

Belongs to the universal ribosomal protein uL30 family. In terms of assembly, part of the 50S ribosomal subunit.

The sequence is that of Large ribosomal subunit protein uL30 from Citrifermentans bemidjiense (strain ATCC BAA-1014 / DSM 16622 / JCM 12645 / Bem) (Geobacter bemidjiensis).